Reading from the N-terminus, the 303-residue chain is MSTLEQTIGNTPLVKLQRMGPDNGSEVWLKLEGNNPAGSVKDRAALSMIVEAEKRGEIKPGDVLIEATSGNTGIALAMIAALKGYRMKLLMPDNMSQERRAAMRAYGAELILVTKEQGMEGARDLALEMANRGEGKLLDQFNNPDNPYAHYTTTGPEIWQQTGGRITHFVSSMGTTGTITGVSRFMREQSKPVTIVGLQPEEGSSIPGIRRWPTEYLPGIFNASLVDEVLDIHQRDAENTMRELAVREGIFCGVSSGGAVAGALRVAKANPDAVVVAIICDRGDRYLSTGVFGEEHFSQGAGI.

N6-(pyridoxal phosphate)lysine is present on K41. Residues N71, 174 to 178 (GTTGT), and S255 contribute to the pyridoxal 5'-phosphate site.

It belongs to the cysteine synthase/cystathionine beta-synthase family. In terms of assembly, homodimer. Pyridoxal 5'-phosphate is required as a cofactor.

It catalyses the reaction O-acetyl-L-serine + hydrogen sulfide = L-cysteine + acetate. It functions in the pathway amino-acid biosynthesis; L-cysteine biosynthesis; L-cysteine from L-serine: step 2/2. Its function is as follows. Two cysteine synthase enzymes are found. Both catalyze the same reaction. Cysteine synthase B can also use thiosulfate in place of sulfide to give cysteine thiosulfonate as a product. The sequence is that of Cysteine synthase B (cysM) from Escherichia coli (strain K12).